Consider the following 119-residue polypeptide: Integration host factor subunit alpha (119 aa).

The disordered stretch occupies residues 96–119; sequence INGQQANGKMNGESAPSEFSAETE.

The protein belongs to the bacterial histone-like protein family. In terms of assembly, heterodimer of an alpha and a beta chain.

In terms of biological role, this protein is one of the two subunits of integration host factor, a specific DNA-binding protein that functions in genetic recombination as well as in transcriptional and translational control. The protein is Integration host factor subunit alpha of Bradyrhizobium sp. (strain ORS 278).